The sequence spans 260 residues: Proteasome subunit alpha (260 aa).

The interval 231–260 is disordered; sequence LLPEDFSPGQTEGGGDPAPESGDSKDAKDN.

The protein belongs to the peptidase T1A family. As to quaternary structure, the 20S proteasome core is composed of 14 alpha and 14 beta subunits that assemble into four stacked heptameric rings, resulting in a barrel-shaped structure. The two inner rings, each composed of seven catalytic beta subunits, are sandwiched by two outer rings, each composed of seven alpha subunits. The catalytic chamber with the active sites is on the inside of the barrel. Has a gated structure, the ends of the cylinder being occluded by the N-termini of the alpha-subunits. Is capped by the proteasome-associated ATPase, ARC.

The protein resides in the cytoplasm. The protein operates within protein degradation; proteasomal Pup-dependent pathway. The formation of the proteasomal ATPase ARC-20S proteasome complex, likely via the docking of the C-termini of ARC into the intersubunit pockets in the alpha-rings, may trigger opening of the gate for substrate entry. Interconversion between the open-gate and close-gate conformations leads to a dynamic regulation of the 20S proteasome proteolysis activity. In terms of biological role, component of the proteasome core, a large protease complex with broad specificity involved in protein degradation. This is Proteasome subunit alpha from Mycobacteroides abscessus (strain ATCC 19977 / DSM 44196 / CCUG 20993 / CIP 104536 / JCM 13569 / NCTC 13031 / TMC 1543 / L948) (Mycobacterium abscessus).